Here is a 185-residue protein sequence, read N- to C-terminus: Inner membrane-spanning protein YciB (185 aa).

5 consecutive transmembrane segments (helical) span residues 19–39 (LGGVREAAIVLVVATILQIVI), 53–73 (IMASAVVFFGLLTAYFNEIRY), 76–96 (WKVTIINGLFAIVLLIAQFQF), 118–138 (TLNFGWAIFFIICMLVNIYIS), and 149–169 (FKSFGIIGMTVIATIISGVYI).

Belongs to the YciB family.

Its subcellular location is the cell inner membrane. In terms of biological role, plays a role in cell envelope biogenesis, maintenance of cell envelope integrity and membrane homeostasis. This Haemophilus influenzae (strain PittEE) protein is Inner membrane-spanning protein YciB.